Reading from the N-terminus, the 479-residue chain is FAD-dependent monooxygenase ausM (479 aa).

3 residues coordinate FAD: Glu-40, Gly-54, and Arg-113. Residue Tyr-224 is part of the active site. An N-linked (GlcNAc...) asparagine glycan is attached at Asn-289. FAD is bound by residues Asp-316 and Ala-329. The helical transmembrane segment at Thr-449 to Tyr-469 threads the bilayer.

It belongs to the paxM FAD-dependent monooxygenase family. FAD is required as a cofactor.

It localises to the membrane. It functions in the pathway secondary metabolite biosynthesis; terpenoid biosynthesis. Functionally, FAD-dependent monooxygenase; part of the gene cluster B that mediates the biosynthesis of austinol and dehydroaustinol, two fungal meroterpenoids. The first step of the pathway is the synthesis of 3,5-dimethylorsellinic acid by the polyketide synthase ausA. 3,5-dimethylorsellinic acid is then prenylated by the polyprenyl transferase ausN. Further epoxidation by the FAD-dependent monooxygenase ausM and cyclization by the probable terpene cyclase ausL lead to the formation of protoaustinoid A. Protoaustinoid A is then oxidized to spiro-lactone preaustinoid A3 by the combined action of the FAD-binding monooxygenases ausB and ausC, and the dioxygenase ausE. Acid-catalyzed keto-rearrangement and ring contraction of the tetraketide portion of preaustinoid A3 by ausJ lead to the formation of preaustinoid A4. The aldo-keto reductase ausK, with the help of ausH, is involved in the next step by transforming preaustinoid A4 into isoaustinone which is in turn hydroxylated by the P450 monooxygenase ausI to form austinolide. Finally, the cytochrome P450 monooxygenase ausG modifies austinolide to austinol. Austinol can be further modified to dehydroaustinol which forms a diffusible complex with diorcinol that initiates conidiation. Due to genetic rearrangements of the clusters and the subsequent loss of some enzymes, the end products of the Emericella nidulans austinoid biosynthesis clusters are austinol and dehydroaustinol, even if additional enzymes, such as the O-acetyltransferase ausQ and the cytochrome P450 monooxygenase ausR are still functional. The polypeptide is FAD-dependent monooxygenase ausM (Emericella nidulans (strain FGSC A4 / ATCC 38163 / CBS 112.46 / NRRL 194 / M139) (Aspergillus nidulans)).